A 354-amino-acid chain; its full sequence is UDP-N-acetylglucosamine--N-acetylmuramyl-(pentapeptide) pyrophosphoryl-undecaprenol N-acetylglucosamine transferase (354 aa).

UDP-N-acetyl-alpha-D-glucosamine contacts are provided by residues Ser11–Gly13, Arg164, Ser194, and Gln289.

This sequence belongs to the glycosyltransferase 28 family. MurG subfamily.

The protein resides in the cell membrane. It carries out the reaction di-trans,octa-cis-undecaprenyl diphospho-N-acetyl-alpha-D-muramoyl-L-alanyl-D-glutamyl-meso-2,6-diaminopimeloyl-D-alanyl-D-alanine + UDP-N-acetyl-alpha-D-glucosamine = di-trans,octa-cis-undecaprenyl diphospho-[N-acetyl-alpha-D-glucosaminyl-(1-&gt;4)]-N-acetyl-alpha-D-muramoyl-L-alanyl-D-glutamyl-meso-2,6-diaminopimeloyl-D-alanyl-D-alanine + UDP + H(+). It functions in the pathway cell wall biogenesis; peptidoglycan biosynthesis. Cell wall formation. Catalyzes the transfer of a GlcNAc subunit on undecaprenyl-pyrophosphoryl-MurNAc-pentapeptide (lipid intermediate I) to form undecaprenyl-pyrophosphoryl-MurNAc-(pentapeptide)GlcNAc (lipid intermediate II). The chain is UDP-N-acetylglucosamine--N-acetylmuramyl-(pentapeptide) pyrophosphoryl-undecaprenol N-acetylglucosamine transferase from Shouchella clausii (strain KSM-K16) (Alkalihalobacillus clausii).